We begin with the raw amino-acid sequence, 302 residues long: tRNA dimethylallyltransferase (302 aa).

10 to 17 (GPTATGKS) provides a ligand contact to ATP. Residue 12 to 17 (TATGKS) coordinates substrate. The segment at 35–38 (DSRQ) is interaction with substrate tRNA.

It belongs to the IPP transferase family. Monomer. Requires Mg(2+) as cofactor.

The enzyme catalyses adenosine(37) in tRNA + dimethylallyl diphosphate = N(6)-dimethylallyladenosine(37) in tRNA + diphosphate. Catalyzes the transfer of a dimethylallyl group onto the adenine at position 37 in tRNAs that read codons beginning with uridine, leading to the formation of N6-(dimethylallyl)adenosine (i(6)A). This chain is tRNA dimethylallyltransferase, found in Acaryochloris marina (strain MBIC 11017).